The primary structure comprises 406 residues: MARAFLFVLDSFGVGGAPDAAAYGDEGADTLGHIAEFCAAGAGDRAGLRDGPLSLPNLSELGLMQIARSASGRFPAGMPIPEKVYGIYGAATEISRGKDTPSGHWEIAGTPVSFDWGYFPTEGDAFPEELIEALCRDAGVSGILGNCHASGTEIIARLGEEHIRTGKPICYTSSDSVFQVAAHEVHFGLDRLLAFCQVARGLLDRYNIGRVIARPFIGHSSSTFQRTGNRRDFSVLPPEPTLLDRLIEHGRHVHAVGKIGDIFAHQGISRLIKANGNEALMDATLATIDEAEDGDLVFTNFVDFDMVYGHRRDVPGYAAALEAFDARLAEVHKKLKPGDLVVLTADHGCDPTWRGTDHTRERVPVIAYGPGIRSRSIGVRRSYADIGESIARHLGIPAGPHGRSFL.

Aspartate 10, aspartate 305, histidine 310, aspartate 346, histidine 347, and histidine 358 together coordinate Mn(2+).

This sequence belongs to the phosphopentomutase family. Mn(2+) serves as cofactor.

The protein resides in the cytoplasm. The catalysed reaction is 2-deoxy-alpha-D-ribose 1-phosphate = 2-deoxy-D-ribose 5-phosphate. It catalyses the reaction alpha-D-ribose 1-phosphate = D-ribose 5-phosphate. The protein operates within carbohydrate degradation; 2-deoxy-D-ribose 1-phosphate degradation; D-glyceraldehyde 3-phosphate and acetaldehyde from 2-deoxy-alpha-D-ribose 1-phosphate: step 1/2. Isomerase that catalyzes the conversion of deoxy-ribose 1-phosphate (dRib-1-P) and ribose 1-phosphate (Rib-1-P) to deoxy-ribose 5-phosphate (dRib-5-P) and ribose 5-phosphate (Rib-5-P), respectively. The polypeptide is Phosphopentomutase (Rhizobium leguminosarum bv. trifolii (strain WSM2304)).